Consider the following 169-residue polypeptide: Putative antitoxin Rv0268c (169 aa).

Residues 1–11 (MGTRSKSRTRQ) are compositionally biased toward basic residues. A disordered region spans residues 1 to 35 (MGTRSKSRTRQLKQSNGCTATTSGASDRRRRARRR). Positions 120-153 (AAILISAERYESLMEELEDLRDRLSVHEREHVTM) form a coiled coil.

It belongs to the phD/YefM antitoxin family.

In terms of biological role, putative antitoxin component of a type II toxin-antitoxin (TA) system; however the expected toxin coding sequence is not found adjacent to this gene. The protein is Putative antitoxin Rv0268c of Mycobacterium tuberculosis (strain ATCC 25618 / H37Rv).